The primary structure comprises 258 residues: Thiazole synthase 1 (258 aa).

The active-site Schiff-base intermediate with DXP is K97. 1-deoxy-D-xylulose 5-phosphate-binding positions include G158, 184-185 (AG), and 206-207 (NT).

It belongs to the ThiG family. Homotetramer. Forms heterodimers with either ThiH or ThiS.

Its subcellular location is the cytoplasm. The enzyme catalyses [ThiS sulfur-carrier protein]-C-terminal-Gly-aminoethanethioate + 2-iminoacetate + 1-deoxy-D-xylulose 5-phosphate = [ThiS sulfur-carrier protein]-C-terminal Gly-Gly + 2-[(2R,5Z)-2-carboxy-4-methylthiazol-5(2H)-ylidene]ethyl phosphate + 2 H2O + H(+). It functions in the pathway cofactor biosynthesis; thiamine diphosphate biosynthesis. Catalyzes the rearrangement of 1-deoxy-D-xylulose 5-phosphate (DXP) to produce the thiazole phosphate moiety of thiamine. Sulfur is provided by the thiocarboxylate moiety of the carrier protein ThiS. In vitro, sulfur can be provided by H(2)S. This chain is Thiazole synthase 1, found in Syntrophotalea carbinolica (strain DSM 2380 / NBRC 103641 / GraBd1) (Pelobacter carbinolicus).